Consider the following 91-residue polypeptide: MSIRIEIGDKWVITSDQYQFILNEKKVVKTGNKAGEEWLDTIGYYPKINQLISGLVHHHIHTAMIISLSAMAEEIEKLSFICEEAFKAVKK.

It to phage P2 ORF83.

This is an uncharacterized protein from Escherichia phage 186 (Bacteriophage 186).